The following is a 375-amino-acid chain: MSATPIGFFGLKLVPGKVHRMDVSRDFKITNVSYADQPKSNTKTLVKIHYTHVPGFEDDYDEEEQEKEPKSTDEEEEIEEKVYTLCSLNGANKDHAVVDLQFCQEELIGFSITGDAPVDLVGNYVAPPDFFDQDPSDSELYSDDEDDDEDMYGLDSDDFDDDDDDDMDEDPDRFEELVESSASKPKKAIEAAPLADSKKRAAEKPVKETAAKKLKADASAASAASTPTKAIETKGEKQTKGAKDTKPKSETVEKKTVDKSTSKMTTTKLPSGLVIEEKSAGSGPPCKAGQKVGMRYVGKLTNGKVFDQCTSGKPFYFKLGKGEVIKGWDEGVKGMRVGAERRLTCPPKLAYGNQKIPGIPANSTLVFDVKLVEIK.

2 disordered regions span residues 55 to 78 (GFED…EEEI) and 127 to 265 (PPDF…SKMT). Composition is skewed to acidic residues over residues 56 to 66 (FEDDYDEEEQE) and 131 to 173 (FDQD…DPDR). The segment covering 196 to 216 (DSKKRAAEKPVKETAAKKLKA) has biased composition (basic and acidic residues). A compositionally biased stretch (low complexity) spans 217–230 (DASAASAASTPTKA). Positions 231 to 261 (IETKGEKQTKGAKDTKPKSETVEKKTVDKST) are enriched in basic and acidic residues. The region spanning 289 to 375 (GQKVGMRYVG…VFDVKLVEIK (87 aa)) is the PPIase FKBP-type domain.

Belongs to the FKBP-type PPIase family. FKBP3/4 subfamily. As to quaternary structure, binds to histones H3 and H4.

Its subcellular location is the nucleus. It carries out the reaction [protein]-peptidylproline (omega=180) = [protein]-peptidylproline (omega=0). Inhibited by both FK506 and rapamycin. Functionally, PPIase that acts as a histone chaperone. Histone proline isomerase that increases the rate of cis-trans isomerization at prolines on the histone H3 N-terminal tail. Proline isomerization influences H3 methylation thereby regulating gene expression. This chain is FK506-binding protein 4 (FPR4), found in Mycosarcoma maydis (Corn smut fungus).